A 291-amino-acid chain; its full sequence is Probable endonuclease 4 (291 aa).

9 residues coordinate Zn(2+): histidine 72, histidine 112, glutamate 147, aspartate 181, histidine 184, histidine 215, aspartate 228, histidine 230, and glutamate 260.

The protein belongs to the AP endonuclease 2 family. The cofactor is Zn(2+).

It carries out the reaction Endonucleolytic cleavage to 5'-phosphooligonucleotide end-products.. Functionally, endonuclease IV plays a role in DNA repair. It cleaves phosphodiester bonds at apurinic or apyrimidinic (AP) sites, generating a 3'-hydroxyl group and a 5'-terminal sugar phosphate. This Mycoplasma genitalium (strain ATCC 33530 / DSM 19775 / NCTC 10195 / G37) (Mycoplasmoides genitalium) protein is Probable endonuclease 4.